The sequence spans 240 residues: Transcriptional activator protein VanR (240 aa).

Residues 169–234 (DAKPRAVLTA…QAITKAILGG (66 aa)) form the HTH luxR-type domain. The H-T-H motif DNA-binding region spans 193–212 (AWEIATIINTSERTVKFHFS).

The protein belongs to the autoinducer-regulated transcriptional regulatory protein family.

Functionally, probable transcriptional activator. Binds to autoinducer molecule ODHL. This Vibrio anguillarum (Listonella anguillarum) protein is Transcriptional activator protein VanR (vanR).